The chain runs to 508 residues: Bifunctional purine biosynthesis protein PurH (508 aa).

Residues M1–V144 form the MGS-like domain.

It belongs to the PurH family.

It catalyses the reaction (6R)-10-formyltetrahydrofolate + 5-amino-1-(5-phospho-beta-D-ribosyl)imidazole-4-carboxamide = 5-formamido-1-(5-phospho-D-ribosyl)imidazole-4-carboxamide + (6S)-5,6,7,8-tetrahydrofolate. It carries out the reaction IMP + H2O = 5-formamido-1-(5-phospho-D-ribosyl)imidazole-4-carboxamide. Its pathway is purine metabolism; IMP biosynthesis via de novo pathway; 5-formamido-1-(5-phospho-D-ribosyl)imidazole-4-carboxamide from 5-amino-1-(5-phospho-D-ribosyl)imidazole-4-carboxamide (10-formyl THF route): step 1/1. The protein operates within purine metabolism; IMP biosynthesis via de novo pathway; IMP from 5-formamido-1-(5-phospho-D-ribosyl)imidazole-4-carboxamide: step 1/1. The protein is Bifunctional purine biosynthesis protein PurH of Leuconostoc citreum (strain KM20).